The following is a 600-amino-acid chain: UvrABC system protein C (600 aa).

Residues 16–94 (EKPGCYQYFD…IKEYQPRYNV (79 aa)) form the GIY-YIG domain. Residues 208–243 (HRLVRMYRDRMQAYSEELRFEEAQICKERIELLERY) form the UVR domain.

Belongs to the UvrC family. In terms of assembly, interacts with UvrB in an incision complex.

It localises to the cytoplasm. Its function is as follows. The UvrABC repair system catalyzes the recognition and processing of DNA lesions. UvrC both incises the 5' and 3' sides of the lesion. The N-terminal half is responsible for the 3' incision and the C-terminal half is responsible for the 5' incision. This Porphyromonas gingivalis (strain ATCC 33277 / DSM 20709 / CIP 103683 / JCM 12257 / NCTC 11834 / 2561) protein is UvrABC system protein C.